The chain runs to 207 residues: Outer-membrane lipoprotein LolB (207 aa).

An N-terminal signal peptide occupies residues 1–21 (MTLPDFRLIRLLPLASLVLTA). Cysteine 22 carries N-palmitoyl cysteine lipidation. Cysteine 22 is lipidated: S-diacylglycerol cysteine.

This sequence belongs to the LolB family. Monomer.

It localises to the cell outer membrane. Plays a critical role in the incorporation of lipoproteins in the outer membrane after they are released by the LolA protein. The sequence is that of Outer-membrane lipoprotein LolB from Salmonella agona (strain SL483).